We begin with the raw amino-acid sequence, 380 residues long: Glucose-1-phosphate adenylyltransferase (380 aa).

Residues glycine 164, glutamate 179 to lysine 180, and serine 190 contribute to the alpha-D-glucose 1-phosphate site.

This sequence belongs to the bacterial/plant glucose-1-phosphate adenylyltransferase family. In terms of assembly, homotetramer.

The enzyme catalyses alpha-D-glucose 1-phosphate + ATP + H(+) = ADP-alpha-D-glucose + diphosphate. Its pathway is glycan biosynthesis; glycogen biosynthesis. In terms of biological role, involved in the biosynthesis of ADP-glucose, a building block required for the elongation reactions to produce glycogen. Catalyzes the reaction between ATP and alpha-D-glucose 1-phosphate (G1P) to produce pyrophosphate and ADP-Glc. In Streptococcus pneumoniae (strain Hungary19A-6), this protein is Glucose-1-phosphate adenylyltransferase.